The sequence spans 250 residues: 3-deoxy-manno-octulosonate cytidylyltransferase (250 aa).

Belongs to the KdsB family.

It localises to the cytoplasm. It carries out the reaction 3-deoxy-alpha-D-manno-oct-2-ulosonate + CTP = CMP-3-deoxy-beta-D-manno-octulosonate + diphosphate. It functions in the pathway nucleotide-sugar biosynthesis; CMP-3-deoxy-D-manno-octulosonate biosynthesis; CMP-3-deoxy-D-manno-octulosonate from 3-deoxy-D-manno-octulosonate and CTP: step 1/1. It participates in bacterial outer membrane biogenesis; lipopolysaccharide biosynthesis. In terms of biological role, activates KDO (a required 8-carbon sugar) for incorporation into bacterial lipopolysaccharide in Gram-negative bacteria. This Sinorhizobium medicae (strain WSM419) (Ensifer medicae) protein is 3-deoxy-manno-octulosonate cytidylyltransferase.